The chain runs to 359 residues: ELAV-like protein 2 (359 aa).

Positions 1–39 are disordered; that stretch reads METQLSNGPTCNNTANGPTTVNNNCSSPVDSGNTEDSKT. RRM domains follow at residues 39–117 and 125–205; these read TNLI…YARP and ANLY…FANN. A Phosphoserine modification is found at serine 221. In terms of domain architecture, RRM 3 spans 276–354; it reads WCIFVYNLAP…RVLQVSFKTN (79 aa).

Belongs to the RRM elav family. Interacts with IGF2BP1. Interacts with MAP1B light chain LC1.

RNA-binding protein that binds to the 3' untranslated region (3'UTR) of target mRNAs. Seems to recognize a GAAA motif. Can bind to its own 3'UTR, the FOS 3'UTR and the ID 3'UTR. The chain is ELAV-like protein 2 (Elavl2) from Rattus norvegicus (Rat).